Here is a 208-residue protein sequence, read N- to C-terminus: Uracil phosphoribosyltransferase (208 aa).

Residues Arg-78, Arg-103, and 130–138 each bind 5-phospho-alpha-D-ribose 1-diphosphate; that span reads DPMLATGGT. Uracil-binding positions include Ile-193 and 198–200; that span reads GDA. Asp-199 lines the 5-phospho-alpha-D-ribose 1-diphosphate pocket.

It belongs to the UPRTase family. Mg(2+) serves as cofactor.

The enzyme catalyses UMP + diphosphate = 5-phospho-alpha-D-ribose 1-diphosphate + uracil. Its pathway is pyrimidine metabolism; UMP biosynthesis via salvage pathway; UMP from uracil: step 1/1. Its activity is regulated as follows. Allosterically activated by GTP. Its function is as follows. Catalyzes the conversion of uracil and 5-phospho-alpha-D-ribose 1-diphosphate (PRPP) to UMP and diphosphate. The polypeptide is Uracil phosphoribosyltransferase (Maridesulfovibrio salexigens (strain ATCC 14822 / DSM 2638 / NCIMB 8403 / VKM B-1763) (Desulfovibrio salexigens)).